The following is a 415-amino-acid chain: Imidazolonepropionase (415 aa).

Residues H83 and H85 each coordinate Fe(3+). Zn(2+) contacts are provided by H83 and H85. The 4-imidazolone-5-propanoate site is built by R92, Y155, and H188. Y155 contributes to the N-formimidoyl-L-glutamate binding site. H250 contacts Fe(3+). Position 250 (H250) interacts with Zn(2+). Q253 contacts 4-imidazolone-5-propanoate. Fe(3+) is bound at residue D324. D324 is a binding site for Zn(2+). N326 and G328 together coordinate N-formimidoyl-L-glutamate. S329 provides a ligand contact to 4-imidazolone-5-propanoate.

Belongs to the metallo-dependent hydrolases superfamily. HutI family. Requires Zn(2+) as cofactor. It depends on Fe(3+) as a cofactor.

It is found in the cytoplasm. The catalysed reaction is 4-imidazolone-5-propanoate + H2O = N-formimidoyl-L-glutamate. It participates in amino-acid degradation; L-histidine degradation into L-glutamate; N-formimidoyl-L-glutamate from L-histidine: step 3/3. Functionally, catalyzes the hydrolytic cleavage of the carbon-nitrogen bond in imidazolone-5-propanoate to yield N-formimidoyl-L-glutamate. It is the third step in the universal histidine degradation pathway. The protein is Imidazolonepropionase of Rubrobacter xylanophilus (strain DSM 9941 / JCM 11954 / NBRC 16129 / PRD-1).